Here is a 31-residue protein sequence, read N- to C-terminus: Elongation factor Tu (31 aa).

This sequence belongs to the GTP-binding elongation factor family. EF-Tu/EF-1A subfamily. Monomer.

It localises to the cytoplasm. Its function is as follows. This protein promotes the GTP-dependent binding of aminoacyl-tRNA to the A-site of ribosomes during protein biosynthesis. This chain is Elongation factor Tu (tuf), found in Streptomyces laurentii.